The sequence spans 590 residues: Potassium-transporting ATPase potassium-binding subunit (590 aa).

Transmembrane regions (helical) follow at residues 3 to 23, 63 to 83, 134 to 154, 177 to 197, 284 to 304, 312 to 332, 359 to 379, 388 to 408, 411 to 431, 451 to 471, 515 to 535, and 558 to 578; these read AFLL…KPLG, HYAL…YALQ, GLAV…IALI, VYVL…QGVI, FVQM…FGGM, WAVL…LAWA, FGIV…CGAV, ALGG…FGGV, GLYG…LMIG, IAIL…VVVT, LALG…VLAM, and LFVV…YIPA.

It belongs to the KdpA family. The system is composed of three essential subunits: KdpA, KdpB and KdpC.

Its subcellular location is the cell inner membrane. Its function is as follows. Part of the high-affinity ATP-driven potassium transport (or Kdp) system, which catalyzes the hydrolysis of ATP coupled with the electrogenic transport of potassium into the cytoplasm. This subunit binds the periplasmic potassium ions and delivers the ions to the membrane domain of KdpB through an intramembrane tunnel. The chain is Potassium-transporting ATPase potassium-binding subunit from Ralstonia pickettii (strain 12J).